We begin with the raw amino-acid sequence, 151 residues long: UPF0251 protein Ctha_0452 (151 aa).

This sequence belongs to the UPF0251 family.

The polypeptide is UPF0251 protein Ctha_0452 (Chloroherpeton thalassium (strain ATCC 35110 / GB-78)).